The primary structure comprises 155 residues: MKVEIDSFSGAKIYPGRGTLFVRGDSKIFRFQNSKSASLFKQRKNPRRVAWTVLYRRHHKKGITEEVAKKRSRKTVKAQRAIVGASLELIKERRSLKPEVRKAKRDDKAKADKEKKKADKAARKAEKAKLAAAQGSKVSKQQAKGAFQKVAATSR.

The segment covering 98 to 129 has biased composition (basic and acidic residues); the sequence is PEVRKAKRDDKAKADKEKKKADKAARKAEKAK. Positions 98–155 are disordered; sequence PEVRKAKRDDKAKADKEKKKADKAARKAEKAKLAAAQGSKVSKQQAKGAFQKVAATSR.

Belongs to the eukaryotic ribosomal protein eL24 family.

This chain is Large ribosomal subunit protein eL24 (RPL24), found in Candida glabrata (strain ATCC 2001 / BCRC 20586 / JCM 3761 / NBRC 0622 / NRRL Y-65 / CBS 138) (Yeast).